A 300-amino-acid polypeptide reads, in one-letter code: Cytochrome b (300 aa).

6 helical membrane-spanning segments follow: residues 28–48, 72–94, 107–127, 168–187, 223–243, and 279–299; these read YGFL…LLAL, WCFR…LHIL, SWIS…YGYV, FFVF…FGIL, IPNK…LFLL, and IGCQ…YIIL. Positions 78 and 92 each coordinate heme b.

Belongs to the cytochrome b family. As to quaternary structure, the main subunits of complex b-c1 are: cytochrome b, cytochrome c1 and the Rieske protein. Heme b is required as a cofactor.

Its subcellular location is the mitochondrion inner membrane. Component of the ubiquinol-cytochrome c reductase complex (complex III or cytochrome b-c1 complex) that is part of the mitochondrial respiratory chain. The b-c1 complex mediates electron transfer from ubiquinol to cytochrome c. Contributes to the generation of a proton gradient across the mitochondrial membrane that is then used for ATP synthesis. The polypeptide is Cytochrome b (MT-CYB) (Plasmodium gallinaceum).